Consider the following 624-residue polypeptide: Leucine-rich repeat, immunoglobulin-like domain and transmembrane domain-containing protein 1 (624 aa).

An N-terminal signal peptide occupies residues 1–21 (MWVALGMLWLLALGGPHQAWG). Residues 22–59 (FCPSECSCSLRILSDGSKARTVVCSDPDLTLPPASIPP) enclose the LRRNT domain. Topologically, residues 22–527 (FCPSECSCSL…EVVDAEGTQR (506 aa)) are lumenal. LRR repeat units lie at residues 60–81 (DTCKLRLERTAIRRVPGETFRP), 84–105 (RLEQLWLPYNALSELSALMLRG), 108–129 (RLRELRLPGNRLVTFPWAALRD), 132–153 (QLQLLDLQANRLSTLPPEAAHF), and 156–177 (NLTFLDLSNNQLMRLPEELLDV). An N-linked (GlcNAc...) asparagine glycan is attached at N156. Residues 201 to 254 (NPWVCDCRLYDLVHLLDGWVSSNLIFIEARLRCASPRSLAGVAFSQLELRKCQS) form the LRRCT domain. An Ig-like C2-type domain is found at 267-336 (PLGSTVLLRC…YICQAKNFLG (70 aa)). Cysteines 276 and 329 form a disulfide. Residues N297 and N456 are each glycosylated (N-linked (GlcNAc...) asparagine). In terms of domain architecture, Fibronectin type-III spans 431-519 (MVRSLKVVGD…QCVIFSTDEV (89 aa)). Residues 526–549 (QRLINMVVISVAAIIALPPTLLVC) form an LRR 6 repeat. A helical transmembrane segment spans residues 528 to 548 (LINMVVISVAAIIALPPTLLV). The Cytoplasmic portion of the chain corresponds to 549–624 (CCGALRRRCH…GGRRINEYFC (76 aa)).

As to quaternary structure, may form a homodimer. Interacts with LRIT2; may form a heterodimer with LRIT2. Interacts (via its N-terminal extracellular domain) with metabotropic glutamate receptor GRM6. Interacts (via its extreme C-terminus) with the scaffold protein FRMPD2 (via the third PDZ domain); the interaction leads to their colocalization in photoreceptor synapses. In terms of tissue distribution, expressed predominantly in developing photoreceptor and bipolar cells.

The protein resides in the endoplasmic reticulum membrane. The protein localises to the cell projection. Its subcellular location is the dendrite. Its function is as follows. Photoreceptor synaptic protein essential for normal vision. Involved in synapse formation in cone photoreceptor cells. The chain is Leucine-rich repeat, immunoglobulin-like domain and transmembrane domain-containing protein 1 (Lrit1) from Mus musculus (Mouse).